We begin with the raw amino-acid sequence, 212 residues long: Uracil phosphoribosyltransferase (212 aa).

Residues Arg-78, Arg-103, and 130 to 138 (DPMLATGGS) each bind 5-phospho-alpha-D-ribose 1-diphosphate. Residues Ile-193 and 198–200 (GDA) contribute to the uracil site. 5-phospho-alpha-D-ribose 1-diphosphate is bound at residue Asp-199.

The protein belongs to the UPRTase family. Mg(2+) serves as cofactor.

It catalyses the reaction UMP + diphosphate = 5-phospho-alpha-D-ribose 1-diphosphate + uracil. Its pathway is pyrimidine metabolism; UMP biosynthesis via salvage pathway; UMP from uracil: step 1/1. Allosterically activated by GTP. Its function is as follows. Catalyzes the conversion of uracil and 5-phospho-alpha-D-ribose 1-diphosphate (PRPP) to UMP and diphosphate. The polypeptide is Uracil phosphoribosyltransferase (Bordetella avium (strain 197N)).